Consider the following 93-residue polypeptide: Alpha-defensin 5 (93 aa).

The N-terminal stretch at Met-1 to Ala-19 is a signal peptide. A propeptide spanning residues Asp-20 to Leu-58 is cleaved from the precursor. 3 cysteine pairs are disulfide-bonded: Cys-64–Cys-92, Cys-66–Cys-81, and Cys-71–Cys-91.

Belongs to the alpha-defensin family.

The protein resides in the secreted. In terms of biological role, probably contributes to the antimicrobial barrier function of the small bowel mucosa. In Mus musculus (Mouse), this protein is Alpha-defensin 5 (Defa5).